A 384-amino-acid polypeptide reads, in one-letter code: 1-deoxy-D-xylulose 5-phosphate reductoisomerase (384 aa).

6 residues coordinate NADPH: Thr-11, Gly-12, Ser-13, Ile-14, Lys-38, and Asn-123. Lys-124 lines the 1-deoxy-D-xylulose 5-phosphate pocket. An NADPH-binding site is contributed by Glu-125. A Mn(2+)-binding site is contributed by Asp-148. 4 residues coordinate 1-deoxy-D-xylulose 5-phosphate: Ser-149, Glu-150, Ser-174, and His-197. Residue Glu-150 coordinates Mn(2+). Position 203 (Gly-203) interacts with NADPH. Positions 210, 215, 216, and 219 each coordinate 1-deoxy-D-xylulose 5-phosphate. Mn(2+) is bound at residue Glu-219.

It belongs to the DXR family. Mg(2+) is required as a cofactor. The cofactor is Mn(2+).

The enzyme catalyses 2-C-methyl-D-erythritol 4-phosphate + NADP(+) = 1-deoxy-D-xylulose 5-phosphate + NADPH + H(+). Its pathway is isoprenoid biosynthesis; isopentenyl diphosphate biosynthesis via DXP pathway; isopentenyl diphosphate from 1-deoxy-D-xylulose 5-phosphate: step 1/6. Its function is as follows. Catalyzes the NADPH-dependent rearrangement and reduction of 1-deoxy-D-xylulose-5-phosphate (DXP) to 2-C-methyl-D-erythritol 4-phosphate (MEP). This chain is 1-deoxy-D-xylulose 5-phosphate reductoisomerase, found in Halothermothrix orenii (strain H 168 / OCM 544 / DSM 9562).